Reading from the N-terminus, the 106-residue chain is Large ribosomal subunit protein P1 (106 aa).

Over residues 66 to 76 (AQPQATQAQPA) the composition is skewed to low complexity. Positions 66–106 (AQPQATQAQPAAEEKKEEKKEEEKKGPSEEEIASGLASLFG) are disordered. Basic and acidic residues predominate over residues 77-93 (AEEKKEEKKEEEKKGPS).

Belongs to the eukaryotic ribosomal protein P1/P2 family. As to quaternary structure, part of the 50S ribosomal subunit. Homodimer, it forms part of the ribosomal stalk which helps the ribosome interact with GTP-bound translation factors. Forms a heptameric uL10/P0(P1)2(P1)2(P1)2 complex, where uL10/P0 forms an elongated spine to which the P1 dimers bind in a sequential fashion.

Functionally, forms part of the ribosomal stalk, playing a central role in the interaction of the ribosome with GTP-bound translation factors. The polypeptide is Large ribosomal subunit protein P1 (Saccharolobus solfataricus (strain ATCC 35092 / DSM 1617 / JCM 11322 / P2) (Sulfolobus solfataricus)).